The primary structure comprises 66 residues: Large ribosomal subunit protein uL29 (66 aa).

Belongs to the universal ribosomal protein uL29 family.

This is Large ribosomal subunit protein uL29 from Kosmotoga olearia (strain ATCC BAA-1733 / DSM 21960 / TBF 19.5.1).